Reading from the N-terminus, the 207-residue chain is Early nodulin-like protein 11 (207 aa).

The N-terminal stretch at 1–24 (MVSLISIVSVVFLLFTTFYHFGEA) is a signal peptide. The Phytocyanin domain occupies 25-130 (RIINVGGSLD…GEKVTVVVQS (106 aa)). N-linked (GlcNAc...) asparagine glycosylation occurs at N43. An intrachain disulfide couples C83 to C118. Positions 129–179 (QSPNHPKPGPAAVTPTLPPKPSTTPAAPAPAPPTPSPKSSTSTMAPAPAPA) are disordered. Over residues 144–164 (TLPPKPSTTPAAPAPAPPTPS) the composition is skewed to pro residues. A compositionally biased stretch (low complexity) spans 165–179 (PKSSTSTMAPAPAPA). S181 carries GPI-anchor amidated serine lipidation. Residues 182–207 (SAVGLVAGNGIFWASTLVAVIGLAFA) constitute a propeptide, removed in mature form.

This sequence belongs to the early nodulin-like (ENODL) family. In terms of tissue distribution, confined to flowers and siliques.

It localises to the cell membrane. Functionally, may act as a carbohydrate transporter. Required, together with ENODL11, ENODL12, ENODL13, ENODL14 and ENODL15, for male-female communication and pollen tube reception and burst at the synergid cell surface of the female gametophyte. The sequence is that of Early nodulin-like protein 11 from Arabidopsis thaliana (Mouse-ear cress).